The following is a 217-amino-acid chain: Adenylate kinase (217 aa).

10–15 (GAGKGT) contributes to the ATP binding site. An NMP region spans residues 30 to 59 (STGDMFRAAMKEETPLGLEAKSYIDKGELV). AMP-binding positions include Thr31, Arg36, 57–59 (ELV), 85–88 (GFPR), and Gln92. Positions 126–163 (GRRICSVCGTTYHLVFNPPKTPGICDKDGGELYQRADD) are LID. Arg127 is an ATP binding site. Residues Cys130 and Cys133 each coordinate Zn(2+). Residue 136 to 137 (TY) participates in ATP binding. Zn(2+) is bound by residues Cys150 and Asp153. 2 residues coordinate AMP: Arg160 and Arg171. An ATP-binding site is contributed by Gln199.

This sequence belongs to the adenylate kinase family. As to quaternary structure, monomer.

The protein resides in the cytoplasm. The catalysed reaction is AMP + ATP = 2 ADP. The protein operates within purine metabolism; AMP biosynthesis via salvage pathway; AMP from ADP: step 1/1. Its function is as follows. Catalyzes the reversible transfer of the terminal phosphate group between ATP and AMP. Plays an important role in cellular energy homeostasis and in adenine nucleotide metabolism. The chain is Adenylate kinase from Bacillus subtilis (strain 168).